We begin with the raw amino-acid sequence, 338 residues long: MSDWQRRHILSLADFSPVEYEMVLRTAAGFAEVLQRRNKKVPTLQGQVVTTLFFEPSTRTRSSFELAAKRLSADTINFAASSSSLSKGETILDTARTYLAMGSDIMVVRHAQAGVPQAIAREMERLGTEVRVLNAGDGQHEHPSQALLDLFTICSVIQPEQPSLGAIAGKKIAIVGDILHSRVARSNIWSLTAAGAEVHLAAPPTLLPPEFAQFANTPIPGSGLPRQLQIHWQLESALENADFVMTLRLQQERMSQSLLPSLREYHREFGLTRDRLRVCQPSVKLLHPGPVNRGVELSSDLMEDESISLIQPQVTNGVAVRMALLYLIGAAVPAAIPA.

Arginine 59 and threonine 60 together coordinate carbamoyl phosphate. Lysine 87 is a binding site for L-aspartate. Residues arginine 109, histidine 142, and glutamine 145 each contribute to the carbamoyl phosphate site. L-aspartate-binding residues include arginine 182 and arginine 248. The carbamoyl phosphate site is built by glycine 289 and proline 290.

It belongs to the aspartate/ornithine carbamoyltransferase superfamily. ATCase family. Heterododecamer (2C3:3R2) of six catalytic PyrB chains organized as two trimers (C3), and six regulatory PyrI chains organized as three dimers (R2).

It carries out the reaction carbamoyl phosphate + L-aspartate = N-carbamoyl-L-aspartate + phosphate + H(+). The protein operates within pyrimidine metabolism; UMP biosynthesis via de novo pathway; (S)-dihydroorotate from bicarbonate: step 2/3. Its function is as follows. Catalyzes the condensation of carbamoyl phosphate and aspartate to form carbamoyl aspartate and inorganic phosphate, the committed step in the de novo pyrimidine nucleotide biosynthesis pathway. This chain is Aspartate carbamoyltransferase catalytic subunit, found in Synechococcus elongatus (strain ATCC 33912 / PCC 7942 / FACHB-805) (Anacystis nidulans R2).